Here is a 576-residue protein sequence, read N- to C-terminus: Glutamine-dependent NAD(+) synthetase (576 aa).

Residues 4 to 246 (LRVTLAQLNP…EEIITVDLDL (243 aa)) form the CN hydrolase domain. The active-site Proton acceptor; for glutaminase activity is the Glu-44. Catalysis depends on Lys-112, which acts as the For glutaminase activity. Tyr-118 is an L-glutamine binding site. Cys-148 acts as the Nucleophile; for glutaminase activity in catalysis. L-glutamine contacts are provided by Ser-176 and Lys-182. A ligase region spans residues 292–576 (PVREEEMFRA…PITNRFKEPL (285 aa)). 321-328 (GLSGGMDS) provides a ligand contact to ATP. Asn-404 serves as a coordination point for deamido-NAD(+). Position 428 (Thr-428) interacts with ATP. Deamido-NAD(+) contacts are provided by Glu-433 and Lys-545.

This sequence in the C-terminal section; belongs to the NAD synthetase family.

The enzyme catalyses deamido-NAD(+) + L-glutamine + ATP + H2O = L-glutamate + AMP + diphosphate + NAD(+) + H(+). It participates in cofactor biosynthesis; NAD(+) biosynthesis; NAD(+) from deamido-NAD(+) (L-Gln route): step 1/1. Functionally, catalyzes the ATP-dependent amidation of deamido-NAD to form NAD. Uses L-glutamine as a nitrogen source. The protein is Glutamine-dependent NAD(+) synthetase (nadE2) of Thermotoga maritima (strain ATCC 43589 / DSM 3109 / JCM 10099 / NBRC 100826 / MSB8).